A 136-amino-acid chain; its full sequence is HTH-type transcriptional regulator LrpA (136 aa).

Positions 2-63 constitute an HTH asnC-type domain; sequence IDEIDKKILD…EVNQVKLGFS (62 aa). The H-T-H motif DNA-binding region spans 21–40; the sequence is MKKLGEKVHLTAPATASRVV.

Functionally, negative regulation of glyA transcription and kinB-dependent sporulation. This Bacillus subtilis (strain 168) protein is HTH-type transcriptional regulator LrpA (lrpA).